Consider the following 296-residue polypeptide: Bifunctional protein FolD (296 aa).

NADP(+)-binding positions include 168–170, Ser-197, and Thr-238; that span reads GRS.

The protein belongs to the tetrahydrofolate dehydrogenase/cyclohydrolase family. Homodimer.

It catalyses the reaction (6R)-5,10-methylene-5,6,7,8-tetrahydrofolate + NADP(+) = (6R)-5,10-methenyltetrahydrofolate + NADPH. It carries out the reaction (6R)-5,10-methenyltetrahydrofolate + H2O = (6R)-10-formyltetrahydrofolate + H(+). The protein operates within one-carbon metabolism; tetrahydrofolate interconversion. In terms of biological role, catalyzes the oxidation of 5,10-methylenetetrahydrofolate to 5,10-methenyltetrahydrofolate and then the hydrolysis of 5,10-methenyltetrahydrofolate to 10-formyltetrahydrofolate. In Porphyromonas gingivalis (strain ATCC BAA-308 / W83), this protein is Bifunctional protein FolD.